Here is a 90-residue protein sequence, read N- to C-terminus: PIK3R3 upstream open reading frame protein (90 aa).

Residues 1–63 (MGPSQLVRAP…PASEATNISD (63 aa)) form a disordered region. Over residues 27–46 (PRRRCPSMFKCSRRTYRQKP) the composition is skewed to basic residues. Polar residues predominate over residues 50–63 (TATNPASEATNISD).

In Mus musculus (Mouse), this protein is PIK3R3 upstream open reading frame protein.